The chain runs to 119 residues: Large ribosomal subunit protein uL22 (119 aa).

Belongs to the universal ribosomal protein uL22 family. In terms of assembly, part of the 50S ribosomal subunit.

In terms of biological role, this protein binds specifically to 23S rRNA; its binding is stimulated by other ribosomal proteins, e.g. L4, L17, and L20. It is important during the early stages of 50S assembly. It makes multiple contacts with different domains of the 23S rRNA in the assembled 50S subunit and ribosome. Functionally, the globular domain of the protein is located near the polypeptide exit tunnel on the outside of the subunit, while an extended beta-hairpin is found that lines the wall of the exit tunnel in the center of the 70S ribosome. In Rickettsia bellii (strain OSU 85-389), this protein is Large ribosomal subunit protein uL22.